Here is a 154-residue protein sequence, read N- to C-terminus: C-type lectin 16 (154 aa).

Residues 1–20 (MALSLYLIAVICSLVGFTAS) form the signal peptide. The region spanning 27–152 (DNRFCFPNVV…CASMRRFVCE (126 aa)) is the C-type lectin domain. Disulfide bonds link Cys-46–Cys-151 and Cys-123–Cys-143.

In terms of assembly, (Microbial infection) Interacts with non-structural protein 1 of dengue virus type 2. Interacts with envelope protein E of dengue virus type 2. In terms of tissue distribution, female salivary gland (at protein level). Not detected in female carcass without salivary glands (at protein level). Not detected in male tissues (at protein level).

Its subcellular location is the secreted. In terms of biological role, putative lectin. May have a regulatory role in mosquito immunity. Probably suppresses replication of dengue virus type 2 in mosquito salivary glands. In Aedes aegypti (Yellowfever mosquito), this protein is C-type lectin 16.